The following is a 570-amino-acid chain: Sulfite reductase [NADPH] hemoprotein beta-component (570 aa).

4 residues coordinate [4Fe-4S] cluster: Cys-434, Cys-440, Cys-479, and Cys-483. Cys-483 provides a ligand contact to siroheme.

The protein belongs to the nitrite and sulfite reductase 4Fe-4S domain family. As to quaternary structure, alpha(8)-beta(8). The alpha component is a flavoprotein, the beta component is a hemoprotein. Siroheme is required as a cofactor. [4Fe-4S] cluster serves as cofactor.

The catalysed reaction is hydrogen sulfide + 3 NADP(+) + 3 H2O = sulfite + 3 NADPH + 4 H(+). The protein operates within sulfur metabolism; hydrogen sulfide biosynthesis; hydrogen sulfide from sulfite (NADPH route): step 1/1. Functionally, component of the sulfite reductase complex that catalyzes the 6-electron reduction of sulfite to sulfide. This is one of several activities required for the biosynthesis of L-cysteine from sulfate. The sequence is that of Sulfite reductase [NADPH] hemoprotein beta-component from Salmonella paratyphi B (strain ATCC BAA-1250 / SPB7).